The primary structure comprises 198 residues: MEFYPVAIEKLIEEFAKLPGVGYKTAQRLTMHVLNLPKEEVEGFADALKKARGTIKYCSVCGNYTDTDPCAICSNPNRDKSLVCVVEEPKDIISMEKVREFNGVYHVLHGVISPMLGKGPDSIKLRELVSRMNGKVKEVIVATNPNVDGEATAMYISKILKPLGVKVTRIAHGIPVGGDLEYADEVTLAKALEGRREI.

The C4-type zinc-finger motif lies at 58 to 73 (CSVCGNYTDTDPCAIC). A Toprim domain is found at 81–175 (SLVCVVEEPK…KVTRIAHGIP (95 aa)).

The protein belongs to the RecR family.

Its function is as follows. May play a role in DNA repair. It seems to be involved in an RecBC-independent recombinational process of DNA repair. It may act with RecF and RecO. This Clostridium acetobutylicum (strain ATCC 824 / DSM 792 / JCM 1419 / IAM 19013 / LMG 5710 / NBRC 13948 / NRRL B-527 / VKM B-1787 / 2291 / W) protein is Recombination protein RecR.